We begin with the raw amino-acid sequence, 156 residues long: uncharacterized protein (156 aa).

The next 5 helical transmembrane spans lie at Leu6–Ala26, Phe34–Pro54, Cys68–Ile88, Trp100–Leu120, and Phe129–Glu149.

Its subcellular location is the cell membrane. This is an uncharacterized protein from Methanocaldococcus jannaschii (strain ATCC 43067 / DSM 2661 / JAL-1 / JCM 10045 / NBRC 100440) (Methanococcus jannaschii).